The primary structure comprises 577 residues: Urease subunit alpha (577 aa).

The region spanning 136–577 (GAIDCHVHLI…LPMAQRYFLF (442 aa)) is the Urease domain. Positions 141, 143, and 224 each coordinate Ni(2+). Position 224 is an N6-carboxylysine (Lys224). His226 is a substrate binding site. Positions 253 and 279 each coordinate Ni(2+). His327 serves as the catalytic Proton donor. Ni(2+) is bound at residue Asp367.

The protein belongs to the metallo-dependent hydrolases superfamily. Urease alpha subunit family. Heterotrimer of UreA (gamma), UreB (beta) and UreC (alpha) subunits. Three heterotrimers associate to form the active enzyme. The cofactor is Ni cation. Carboxylation allows a single lysine to coordinate two nickel ions.

The protein resides in the cytoplasm. It catalyses the reaction urea + 2 H2O + H(+) = hydrogencarbonate + 2 NH4(+). The protein operates within nitrogen metabolism; urea degradation; CO(2) and NH(3) from urea (urease route): step 1/1. This Mycobacterium ulcerans (strain Agy99) protein is Urease subunit alpha.